The following is a 317-amino-acid chain: Transcriptional regulator LsrR (317 aa).

Residues 33–56 constitute a DNA-binding region (H-T-H motif); it reads QSEISDRLGLTRLKVSRLLEKGHQ.

It belongs to the SorC transcriptional regulatory family.

Its subcellular location is the cytoplasm. Inactivated by phosphorylated autoinducer-2 (phospho-AI-2). Phospho-AI-2 acts by binding to LsrR, which is then unable to bind to the promoter regions, allowing the transcription of the target genes. In terms of biological role, transcriptional regulator that represses the expression of the lsr operon in the absence of the quorum-sensing signaling molecule autoinducer 2 (AI-2). It also represses the expression of the lsrRK operon. Acts by binding directly to the lsrA and lsrR promoter regions. In the presence of phosphorylated autoinducer-2 (phospho-AI-2), LsrR is inactivated, leading to the transcription of the genes. In Escherichia coli O139:H28 (strain E24377A / ETEC), this protein is Transcriptional regulator LsrR (lsrR).